The following is a 450-amino-acid chain: tRNA modification GTPase MnmE (450 aa).

Residues arginine 23, glutamate 80, and arginine 123 each contribute to the (6S)-5-formyl-5,6,7,8-tetrahydrofolate site. Residues 219–372 (GLHVVLAGKP…LRQRLLQLAG (154 aa)) form the TrmE-type G domain. Asparagine 229 is a binding site for K(+). GTP is bound by residues 229 to 234 (NVGKSS), 248 to 254 (TPIAGTT), 273 to 276 (DTAG), and 353 to 355 (SAR). Serine 233 lines the Mg(2+) pocket. Positions 248, 250, and 253 each coordinate K(+). Threonine 254 lines the Mg(2+) pocket. Lysine 450 serves as a coordination point for (6S)-5-formyl-5,6,7,8-tetrahydrofolate.

This sequence belongs to the TRAFAC class TrmE-Era-EngA-EngB-Septin-like GTPase superfamily. TrmE GTPase family. Homodimer. Heterotetramer of two MnmE and two MnmG subunits. The cofactor is K(+).

The protein localises to the cytoplasm. Its function is as follows. Exhibits a very high intrinsic GTPase hydrolysis rate. Involved in the addition of a carboxymethylaminomethyl (cmnm) group at the wobble position (U34) of certain tRNAs, forming tRNA-cmnm(5)s(2)U34. In Bordetella parapertussis (strain 12822 / ATCC BAA-587 / NCTC 13253), this protein is tRNA modification GTPase MnmE.